Reading from the N-terminus, the 384-residue chain is 8-amino-7-oxononanoate synthase (384 aa).

Arginine 21 contributes to the substrate binding site. Residue 108–109 (GF) participates in pyridoxal 5'-phosphate binding. Residue histidine 133 participates in substrate binding. Serine 179, histidine 207, and threonine 233 together coordinate pyridoxal 5'-phosphate. The residue at position 236 (lysine 236) is an N6-(pyridoxal phosphate)lysine. Threonine 352 provides a ligand contact to substrate.

Belongs to the class-II pyridoxal-phosphate-dependent aminotransferase family. BioF subfamily. Homodimer. Pyridoxal 5'-phosphate is required as a cofactor.

It carries out the reaction 6-carboxyhexanoyl-[ACP] + L-alanine + H(+) = (8S)-8-amino-7-oxononanoate + holo-[ACP] + CO2. It participates in cofactor biosynthesis; biotin biosynthesis. Catalyzes the decarboxylative condensation of pimeloyl-[acyl-carrier protein] and L-alanine to produce 8-amino-7-oxononanoate (AON), [acyl-carrier protein], and carbon dioxide. This is 8-amino-7-oxononanoate synthase from Escherichia fergusonii (strain ATCC 35469 / DSM 13698 / CCUG 18766 / IAM 14443 / JCM 21226 / LMG 7866 / NBRC 102419 / NCTC 12128 / CDC 0568-73).